The chain runs to 701 residues: Pseudouridylate synthase PUS7L (701 aa).

S79 carries the post-translational modification Phosphoserine. D339 serves as the catalytic Nucleophile. A TRUD domain is found at 424–647; the sequence is GFVNYYGPQR…PGCYRQILKH (224 aa).

Belongs to the pseudouridine synthase TruD family.

It catalyses the reaction a uridine in mRNA = a pseudouridine in mRNA. Pseudouridine synthase that catalyzes pseudouridylation of mRNAs. The polypeptide is Pseudouridylate synthase PUS7L (Homo sapiens (Human)).